A 230-amino-acid chain; its full sequence is Aquaporin Z (230 aa).

The next 2 helical transmembrane spans lie at 9–29 (AELI…VLAA) and 35–55 (IGVL…AFAI). The short motif at 64–66 (NPA) is the NPA 1 element. 3 consecutive transmembrane segments (helical) span residues 83 to 103 (LPYV…IYLI), 131 to 151 (LGAG…VIMG), and 160 to 180 (GFAP…SIPV). Residues 186-188 (NPA) carry the NPA 2 motif. A helical membrane pass occupies residues 194–214 (ALFVGGWALQQLWLFWVAPLI).

Belongs to the MIP/aquaporin (TC 1.A.8) family. In terms of assembly, homotetramer.

The protein resides in the cell inner membrane. The enzyme catalyses H2O(in) = H2O(out). In terms of biological role, channel that permits osmotically driven movement of water in both directions. It is involved in the osmoregulation and in the maintenance of cell turgor during volume expansion in rapidly growing cells. It mediates rapid entry or exit of water in response to abrupt changes in osmolarity. The polypeptide is Aquaporin Z (Pseudomonas putida (strain ATCC 47054 / DSM 6125 / CFBP 8728 / NCIMB 11950 / KT2440)).